A 221-amino-acid polypeptide reads, in one-letter code: Kynurenine formamidase (221 aa).

Substrate is bound at residue phenylalanine 30. Zn(2+) is bound by residues histidine 60, histidine 64, and aspartate 66. Histidine 70 (proton donor/acceptor) is an active-site residue. Zn(2+) is bound by residues histidine 172 and glutamate 184.

It belongs to the Cyclase 1 superfamily. KynB family. Homodimer. It depends on Zn(2+) as a cofactor.

It carries out the reaction N-formyl-L-kynurenine + H2O = L-kynurenine + formate + H(+). It participates in amino-acid degradation; L-tryptophan degradation via kynurenine pathway; L-kynurenine from L-tryptophan: step 2/2. Functionally, catalyzes the hydrolysis of N-formyl-L-kynurenine to L-kynurenine, the second step in the kynurenine pathway of tryptophan degradation. The polypeptide is Kynurenine formamidase (Polaromonas sp. (strain JS666 / ATCC BAA-500)).